The sequence spans 559 residues: Formate--tetrahydrofolate ligase (559 aa).

Residue 68–75 participates in ATP binding; the sequence is TPAGEGKT.

Belongs to the formate--tetrahydrofolate ligase family.

The catalysed reaction is (6S)-5,6,7,8-tetrahydrofolate + formate + ATP = (6R)-10-formyltetrahydrofolate + ADP + phosphate. It functions in the pathway one-carbon metabolism; tetrahydrofolate interconversion. This chain is Formate--tetrahydrofolate ligase, found in Rhizobium rhizogenes (strain K84 / ATCC BAA-868) (Agrobacterium radiobacter).